We begin with the raw amino-acid sequence, 817 residues long: ABC transporter G family member STR (817 aa).

The disordered stretch occupies residues 1-30 (MARLERDGTNKSLESLMDSHKPGGTTTNLN). At 1–542 (MARLERDGTN…RTVLNVIRTP (542 aa)) the chain is on the cytoplasmic side. Residues 43–294 (LEFTNLSYSI…LSGFGRPVPD (252 aa)) form the ABC transporter domain. 87–94 (GPSGAGKS) is a binding site for ATP. Disordered regions lie at residues 321–349 (QYQH…RRNT), 362–395 (GFTA…LERR), and 439–463 (RPPS…GPRS). Over residues 362–375 (GFTAGTPQPDSSQF) the composition is skewed to polar residues. Positions 377-388 (LDDDDNDDDENF) are enriched in acidic residues. The chain crosses the membrane as a helical span at residues 543 to 563 (ELFASREIVLTVMALVLSTIF). The Extracellular portion of the chain corresponds to 564-579 (KNLGDTTFIDINRLLN). Residues 580 to 600 (FYIFAVCLVFFSSNDAVPSFI) traverse the membrane as a helical segment. Residues 601–621 (MERFIFIRETSHNAYRASSYV) are Cytoplasmic-facing. Residues 622-642 (ISSLIVYLPFFAVQGLTFAVI) form a helical membrane-spanning segment. The Extracellular portion of the chain corresponds to 643-657 (TKLMLHLKSNLFNFW). The helical transmembrane segment at 658–678 (MILFASLITTNAYVMLVSALV) threads the bilayer. The Cytoplasmic portion of the chain corresponds to 679–681 (PSY). The chain crosses the membrane as a helical span at residues 682 to 702 (ITGYAVVIATTALFFLTCGFF). The Extracellular portion of the chain corresponds to 703-787 (LKRTQIPAYW…TMDITMESLW (85 aa)). N-linked (GlcNAc...) asparagine glycosylation occurs at N762. Residues 788–808 (YDILILLAWGVLYRFFFYLVL) form a helical membrane-spanning segment. At 809–817 (RFYSKNERK) the chain is on the cytoplasmic side.

The protein belongs to the ABC transporter superfamily. ABCG family. Stunted arbuscule (STR) subfamily. Heterodimerizes with STR2; the resulting transporter is located in the peri-arbuscular membrane. As to expression, expressed constitutively in the vascular tissue of roots.

It localises to the cell membrane. Its function is as follows. Together with STR2, required for arbuscule development in arbuscular mycorrhizal (AM) symbiosis. In Medicago truncatula (Barrel medic), this protein is ABC transporter G family member STR.